Here is an 833-residue protein sequence, read N- to C-terminus: Bifunctional dethiobiotin synthetase/7,8-diamino-pelargonic acid aminotransferase, mitochondrial (833 aa).

The transit peptide at 1–23 directs the protein to the mitochondrion; that stretch reads MIPVTATLIRHRLRHLRHRIRFK. A dethiobiotin synthetase region spans residues 36-299; the sequence is HPTYLIWSAN…VLVLPPVPKD (264 aa). 47–52 serves as a coordination point for ATP; it reads SLGKTL. Mg(2+) is bound at residue threonine 51. Position 81 (threonine 81) interacts with substrate. Aspartate 88 provides a ligand contact to Mg(2+). Residues aspartate 97, 210-213, and 270-271 each bind ATP; these read ETAG and ED. Glutamate 210 is a Mg(2+) binding site. The segment at 332–830 is 7,8-diamino-pelargonic acid aminotransferase; that stretch reads RLNGMAKLAG…TKLYKRLGEF (499 aa). 391-392 is a binding site for (8S)-8-amino-7-oxononanoate; sequence WW. 453-454 is a binding site for pyridoxal 5'-phosphate; the sequence is GS. A (8S)-8-amino-7-oxononanoate-binding site is contributed by tyrosine 495. Residues 518-520 and glutamate 545 contribute to the ATP site; that span reads PWY. Residue aspartate 637 participates in pyridoxal 5'-phosphate binding. (8S)-8-amino-7-oxononanoate contacts are provided by lysine 666 and glycine 700. Lysine 666 carries the post-translational modification N6-(pyridoxal phosphate)lysine. A pyridoxal 5'-phosphate-binding site is contributed by 701-702; the sequence is HS. Arginine 797 is a binding site for (8S)-8-amino-7-oxononanoate.

The protein in the N-terminal section; belongs to the dethiobiotin synthetase family. It in the C-terminal section; belongs to the class-III pyridoxal-phosphate-dependent aminotransferase family. BioA subfamily. In terms of assembly, homodimer. Mg(2+) serves as cofactor. The cofactor is pyridoxal 5'-phosphate.

Its subcellular location is the mitochondrion matrix. The enzyme catalyses (7R,8S)-7,8-diammoniononanoate + CO2 + ATP = (4R,5S)-dethiobiotin + ADP + phosphate + 3 H(+). It catalyses the reaction (8S)-8-amino-7-oxononanoate + S-adenosyl-L-methionine = S-adenosyl-4-methylsulfanyl-2-oxobutanoate + (7R,8S)-7,8-diammoniononanoate. It functions in the pathway cofactor biosynthesis; biotin biosynthesis; biotin from 7,8-diaminononanoate: step 1/2. The protein operates within cofactor biosynthesis; biotin biosynthesis; 7,8-diaminononanoate from 8-amino-7-oxononanoate (SAM route): step 1/1. Bifunctional enzyme that catalyzes two different reactions involved in the biotin biosynthesis. In terms of biological role, catalyzes a mechanistically unusual reaction, the ATP-dependent insertion of CO2 between the N7 and N8 nitrogen atoms of 7,8-diaminopelargonic acid (DAPA) to form an ureido ring. Its function is as follows. Catalyzes the transfer of the alpha-amino group from S-adenosyl-L-methionine (SAM) to 7-keto-8-aminopelargonic acid (KAPA) to form 7,8-diaminopelargonic acid (DAPA). It is the only aminotransferase known to utilize SAM as an amino donor. The polypeptide is Bifunctional dethiobiotin synthetase/7,8-diamino-pelargonic acid aminotransferase, mitochondrial (Arabidopsis thaliana (Mouse-ear cress)).